The primary structure comprises 347 residues: Sesquiterpene synthase M422DRAFT_47084 (347 aa).

D93, N228, S232, and E236 together coordinate Mg(2+). The DDXXD motif signature appears at 93–97 (DEYTD). (2E,6E)-farnesyl diphosphate is bound by residues R318 and Y319.

It belongs to the terpene synthase family. It depends on Mg(2+) as a cofactor.

It catalyses the reaction (2E,6E)-farnesyl diphosphate = viridiflorene + diphosphate. Terpene cyclase that catalyzes the cyclization of farnesyl diphosphate (FPP) to viridiflorene and viridiflorol. The sequence is that of Sesquiterpene synthase M422DRAFT_47084 from Sphaerobolus stellatus (strain SS14).